Here is a 512-residue protein sequence, read N- to C-terminus: Protein spinster homolog 3 (512 aa).

A disordered region spans residues 1-30 (MAGGMSAECPEPGPGGLQGQSPGPGRQCPP). The next 12 helical transmembrane spans lie at 50 to 70 (VLCY…GVLL), 84 to 104 (GLLQ…FGYL), 112 to 132 (ATMS…SFIS), 145 to 165 (IVGT…GDLF), 173 to 193 (VLAV…VLGS), 204 to 224 (WALR…ILLV), 260 to 280 (FVWS…LGFW), 309 to 329 (LIFG…GAEA), 343 to 365 (LICA…LAPT), 377 to 397 (GELL…SVVV), 411 to 431 (VGHI…SSVL), and 450 to 470 (FLCC…TALY). The disordered stretch occupies residues 481–512 (PVTGTPDSNDVDSNDLERQGLLSGAGASTEEP).

The protein belongs to the major facilitator superfamily. Spinster (TC 2.A.1.49) family.

Its subcellular location is the membrane. Its function is as follows. Sphingolipid transporter. The protein is Protein spinster homolog 3 (SPNS3) of Homo sapiens (Human).